The following is a 415-amino-acid chain: PRKCA-binding protein (415 aa).

Residues 22–105 (KVTLQKDAQN…EVTIHYNKLQ (84 aa)) enclose the PDZ domain. Zn(2+) contacts are provided by Cys44 and Cys46. Thr82 carries the post-translational modification Phosphothreonine. Residues 144–357 (LCNDGLVKRL…CYAVLRDADV (214 aa)) form the AH domain. Residues 376 to 415 (EEFTDGEEEEEEEDTAAGEPSRDTRGAAGPLDKGGSWCDS) are disordered. The segment covering 377-391 (EFTDGEEEEEEEDTA) has biased composition (acidic residues). The S-palmitoyl cysteine; by DHHC8 moiety is linked to residue Cys413.

As to quaternary structure, monomer and homodimer. Interacts with CXADR. Interacts presynaptically with the glutamate receptors GRIA2, GRIA3, GRIK3, isoform 3 of GRIA4, isoform A of GRM4, GRM7 and GRM8; with NAPA and NAPB; and with BTG2. The interaction with NAPA and NAPB disrupts the interaction with GRIA2, conducting to the internalization of GRIA2. Interacts with PRKCA; with the amine transporters SLC6A2 and SLC6A3; with the channels ASIC1 and ASIC2; with the GTP-binding proteins ARF1 and ARF3; with the ephrin receptor tyrosine kinases EPHA7, EPHB1 and EPHB2; with ERBB2 and through its PDZ domain with the C-terminal tail of PRLHR. Interacts with UNC5A. Interacts (via AH domain) with NCS1/FREQ; in a calcium-dependent manner. Interacts with F-actin and associates with the ARP2/3 complex. Interacts (via PDZ domain) with ARF1 (activated); the interaction blocks Arp2/3 complex inhibition. Interacts with SORCS3. Post-translationally, phosphorylation at Thr-82 appears to inhibit the interaction with AMPA receptors. Palmitoylation on Cys-413 is essential for long-term synaptic depression (LTD).

The protein localises to the cytoplasm. Its subcellular location is the perinuclear region. It localises to the membrane. It is found in the postsynaptic density. The protein resides in the synapse. The protein localises to the synaptosome. Its subcellular location is the cytoskeleton. Functionally, probable adapter protein that bind to and organize the subcellular localization of a variety of membrane proteins containing some PDZ recognition sequence. Involved in the clustering of various receptors, possibly by acting at the receptor internalization level. Plays a role in synaptic plasticity by regulating the trafficking and internalization of AMPA receptors. May be regulated upon PRKCA activation. May regulate ASIC1/ASIC3 channel. Regulates actin polymerization by inhibiting the actin-nucleating activity of the Arp2/3 complex; the function is competitive with nucleation promoting factors and is linked to neuronal morphology regulation and AMPA receptor (AMPAR) endocytosis. Via interaction with the Arp2/3 complex involved in regulation of synaptic plasicity of excitatory synapses and required for spine shrinkage during long-term depression (LTD). Involved in regulation of astrocyte morphology, antagonistic to Arp2/3 complex activator WASL/N-WASP function. In Macaca fascicularis (Crab-eating macaque), this protein is PRKCA-binding protein (PICK1).